Here is a 665-residue protein sequence, read N- to C-terminus: Chaperone protein dnaK1 (665 aa).

Residue threonine 198 is modified to Phosphothreonine; by autocatalysis. A disordered region spans residues 634 to 665 (DDPWDNQMNSNSRNSRYGNSRDDDPWDNDYFL). The segment covering 642-651 (NSNSRNSRYG) has biased composition (low complexity).

The protein belongs to the heat shock protein 70 family.

Its function is as follows. Acts as a chaperone. The polypeptide is Chaperone protein dnaK1 (dnaK1) (Prochlorococcus marinus subsp. pastoris (strain CCMP1986 / NIES-2087 / MED4)).